We begin with the raw amino-acid sequence, 238 residues long: Succinate dehydrogenase iron-sulfur subunit (238 aa).

In terms of domain architecture, 2Fe-2S ferredoxin-type spans 1–97; it reads MKLEFSIYRY…KIVIRPLPGL (97 aa). 3 residues coordinate [2Fe-2S] cluster: Cys55, Cys60, and Cys75. The 4Fe-4S ferredoxin-type domain maps to 139–169; the sequence is QREKLDGLYECILCACCSTSCPSFWWNPDKF. Positions 149, 152, and 155 each coordinate [4Fe-4S] cluster. Residue Cys159 coordinates [3Fe-4S] cluster. Residue Trp164 coordinates a ubiquinone. The [3Fe-4S] cluster site is built by Cys206 and Cys212. [4Fe-4S] cluster is bound at residue Cys216.

The protein belongs to the succinate dehydrogenase/fumarate reductase iron-sulfur protein family. In terms of assembly, part of an enzyme complex containing four subunits: a flavoprotein, an iron-sulfur, cytochrome b-556, and a hydrophobic anchor protein. The cofactor is [2Fe-2S] cluster. It depends on [3Fe-4S] cluster as a cofactor. Requires [4Fe-4S] cluster as cofactor.

The enzyme catalyses a quinone + succinate = fumarate + a quinol. It functions in the pathway carbohydrate metabolism; tricarboxylic acid cycle; fumarate from succinate (bacterial route): step 1/1. Its function is as follows. Two distinct, membrane-bound, FAD-containing enzymes are responsible for the catalysis of fumarate and succinate interconversion; the fumarate reductase is used in anaerobic growth, and the succinate dehydrogenase is used in aerobic growth. The protein is Succinate dehydrogenase iron-sulfur subunit (sdhB) of Salmonella typhimurium (strain LT2 / SGSC1412 / ATCC 700720).